Here is a 361-residue protein sequence, read N- to C-terminus: Peptide chain release factor 1 (361 aa).

An N5-methylglutamine modification is found at Gln235.

The protein belongs to the prokaryotic/mitochondrial release factor family. In terms of processing, methylated by PrmC. Methylation increases the termination efficiency of RF1.

It localises to the cytoplasm. In terms of biological role, peptide chain release factor 1 directs the termination of translation in response to the peptide chain termination codons UAG and UAA. In Xanthomonas euvesicatoria pv. vesicatoria (strain 85-10) (Xanthomonas campestris pv. vesicatoria), this protein is Peptide chain release factor 1.